The sequence spans 83 residues: Alpha-neurotoxin NTX-1 (83 aa).

The signal sequence occupies residues 1 to 21 (MKTLLLTLLVVTIVCLDLGYT). 4 disulfide bridges follow: Cys-24–Cys-45, Cys-38–Cys-62, Cys-64–Cys-75, and Cys-76–Cys-81.

This sequence belongs to the three-finger toxin family. Short-chain subfamily. Type I alpha-neurotoxin sub-subfamily. As to expression, expressed by the venom gland.

It localises to the secreted. Binds to muscle nicotinic acetylcholine receptor (nAChR) and inhibit acetylcholine from binding to the receptor, thereby impairing neuromuscular transmission. This chain is Alpha-neurotoxin NTX-1, found in Naja sputatrix (Malayan spitting cobra).